The following is a 78-amino-acid chain: Defensin-like protein 149 (78 aa).

An N-terminal signal peptide occupies residues 1 to 25; it reads MMKKLIQLSFTVMIIFTILVLGVVA. Intrachain disulfides connect cysteine 36–cysteine 77, cysteine 45–cysteine 65, cysteine 50–cysteine 71, and cysteine 54–cysteine 73.

The protein belongs to the DEFL family.

The protein localises to the secreted. In Arabidopsis thaliana (Mouse-ear cress), this protein is Defensin-like protein 149 (LCR5).